The chain runs to 990 residues: F-box/LRR-repeat protein 15 (990 aa).

One can recognise an F-box domain in the interval 190 to 236; sequence FEVHIDLTDDLLHMVFSFLNHVDLCRSAMVCRQWRVASAHEDFWRVL. LRR repeat units lie at residues 237-258, 280-303, 317-341, 348-373, 397-423, 441-465, 466-477, 478-503, 519-542, 550-574, 589-612, 614-633, 640-652, 653-678, 734-756, 758-782, 785-809, 813-839, 882-893, 894-914, 915-937, and 949-973; these read NFEN…YPNA, LRNL…ALGE, LGNG…KCRV, CPQL…LLQL, LESL…CANL, LPML…WIAN, SPALEVLELDNC, NLLT…KFTD, CPAL…KQEN, CHSL…IFSD, CESL…GCRA, TSLE…GCDH, QPVA…LGIC, PKLS…VLSE, LPNL…VFKS, IQLK…LYKE, LPAL…LLAC, LTHL…LFDY, FYHLSTLNLSLS, VNLK…LSNC, CSLE…SCNM, and CSSL…KFRT.

The sequence is that of F-box/LRR-repeat protein 15 (FBL15) from Arabidopsis thaliana (Mouse-ear cress).